The primary structure comprises 293 residues: Protein phosphatase 1 regulatory subunit 3B (293 aa).

In terms of domain architecture, CBM21 spans 129 to 237 (RQRIENDHVC…NNQGKNYRII (109 aa)).

As to quaternary structure, interacts with glycogen, PPP1CC catalytic subunit of PP1 and PYGL. Associates with glycogen particles. Forms complexes with debranching enzyme, glycogen phosphorylase, glycogen synthase and phosphorylase kinase which is necessary for its regulation of PP1 activity.

Functionally, acts as a glycogen-targeting subunit for phosphatase PP1. Facilitates interaction of the PP1 with enzymes of the glycogen metabolism and regulates its activity. Suppresses the rate at which PP1 dephosphorylates (inactivates) glycogen phosphorylase and enhances the rate at which it activates glycogen synthase and therefore limits glycogen breakdown. The sequence is that of Protein phosphatase 1 regulatory subunit 3B (ppp1r3b) from Danio rerio (Zebrafish).